The sequence spans 420 residues: Na(+)/H(+) antiporter NhaA (420 aa).

Helical transmembrane passes span 34-54 (TTGG…ANLG), 69-89 (LTIE…IAGL), 107-127 (LVPI…YTLF), 141-161 (IPMA…GAGL), 168-190 (FLLT…FFST), 194-213 (IWWL…MQHF), 271-291 (WSAG…HVSG), 301-321 (PISL…ITLG), 342-362 (IIAV…MTDL), and 374-394 (AKAS…AMLH).

This sequence belongs to the NhaA Na(+)/H(+) (TC 2.A.33) antiporter family.

Its subcellular location is the cell membrane. It catalyses the reaction Na(+)(in) + 2 H(+)(out) = Na(+)(out) + 2 H(+)(in). In terms of biological role, na(+)/H(+) antiporter that extrudes sodium in exchange for external protons. This chain is Na(+)/H(+) antiporter NhaA, found in Cutibacterium acnes (strain DSM 16379 / KPA171202) (Propionibacterium acnes).